The primary structure comprises 333 residues: PDZ domain-containing protein GIPC1 (333 aa).

Basic residues predominate over residues 1 to 11; sequence MPLGLGRRKKA. The segment at 1–53 is disordered; sequence MPLGLGRRKKAPPLVENEEAEPSRSGLGVGEPGPLGGSAAGESQMGLPPPPAA. A compositionally biased stretch (gly residues) spans 27–39; it reads LGVGEPGPLGGSA. Ser68 is subject to Phosphoserine. The region spanning 133 to 213 is the PDZ domain; sequence EVEVFKSEEA…GRTFTLKLTE (81 aa). Ser222, Ser225, and Ser232 each carry phosphoserine. The disordered stretch occupies residues 223–244; it reads QRSAGGHPGSGPQLGTGRGTLR. Gly residues predominate over residues 228 to 240; the sequence is GHPGSGPQLGTGR. Phosphothreonine is present on Thr242. Ser247 bears the Phosphoserine mark.

It belongs to the GIPC family. In terms of assembly, interacts with GLUT1 (C-terminus), ACTN1, KIF1B, MYO6 and PLEKHG5. Interacts with RGS19 C-terminus. Interacts with SDC4/syndecan-4 and SEMA4C/semaphorin-4C. Widely expressed.

The protein resides in the cytoplasm. The protein localises to the membrane. Functionally, inhibits endothelial cell migration (in vitro). May be involved in G protein-linked signaling. The chain is PDZ domain-containing protein GIPC1 (Gipc1) from Mus musculus (Mouse).